A 383-amino-acid polypeptide reads, in one-letter code: Putative glutamate--cysteine ligase 2-2 (383 aa).

Belongs to the glutamate--cysteine ligase type 2 family. YbdK subfamily.

It carries out the reaction L-cysteine + L-glutamate + ATP = gamma-L-glutamyl-L-cysteine + ADP + phosphate + H(+). ATP-dependent carboxylate-amine ligase which exhibits weak glutamate--cysteine ligase activity. The sequence is that of Putative glutamate--cysteine ligase 2-2 from Paenarthrobacter aurescens (strain TC1).